Reading from the N-terminus, the 540-residue chain is Protein SOSEKI 3 (540 aa).

Positions 32–123 (KKVQIVYYLS…YVLKGSELFD (92 aa)) are DIX-like oligomerization domain. Disordered regions lie at residues 147–201 (EPPS…DAKN) and 219–294 (ADAS…SSLG). Low complexity-rich tracts occupy residues 150-163 (SSRS…SSSM) and 185-194 (RSVSSSGVSP). Over residues 221–244 (ASTQTDETVSGRSKTPIETFSRGV) the composition is skewed to polar residues. Positions 246 to 256 (TDEDVSSEPET) are enriched in acidic residues. The span at 280–292 (NSVSPPFSNSASS) shows a compositional bias: low complexity. Positions 342–343 (CG) match the Association to cell membranes motif. Positions 412-492 (KKDAADSNAS…KNIPCTTKTH (81 aa)) are disordered. The segment covering 418–437 (SNASLKRSSSYNGDRASNQM) has biased composition (polar residues). Residues 471 to 482 (SEKRRDSSEDTT) are compositionally biased toward basic and acidic residues.

Belongs to the SOSEKI family. In terms of assembly, homodimer. Forms long polymer filaments with other SOKs proteins polymers (e.g. SOK1, SOK2, SOK3 and SOK4) crucial for polar localization and biological activity. Binds to ANGUSTIFOLIA (AN). In terms of tissue distribution, expressed during embryogenesis and in roots.

It localises to the cell membrane. In terms of biological role, SOSEKI proteins (SOK1-5) locally interpret global polarity cues and can influence cell division orientation to coordinate cell polarization relative to body axes, probably by guiding ANGUSTIFOLIA (AN) polarized localization. This is Protein SOSEKI 3 from Arabidopsis thaliana (Mouse-ear cress).